The primary structure comprises 440 residues: tRNA modification GTPase MnmE (440 aa).

(6S)-5-formyl-5,6,7,8-tetrahydrofolate contacts are provided by R34, E94, and R134. Residues 229 to 367 (GVRVVLAGPP…LVALLLDRAA (139 aa)) form the TrmE-type G domain. Position 239 (N239) interacts with K(+). Residues 239 to 244 (NAGKST), 258 to 264 (TPIAGTT), 283 to 286 (DTAG), and 348 to 350 (SAR) each bind GTP. S243 provides a ligand contact to Mg(2+). K(+) contacts are provided by T258, I260, and T263. Position 264 (T264) interacts with Mg(2+). K440 contacts (6S)-5-formyl-5,6,7,8-tetrahydrofolate.

The protein belongs to the TRAFAC class TrmE-Era-EngA-EngB-Septin-like GTPase superfamily. TrmE GTPase family. In terms of assembly, homodimer. Heterotetramer of two MnmE and two MnmG subunits. Requires K(+) as cofactor.

It localises to the cytoplasm. Exhibits a very high intrinsic GTPase hydrolysis rate. Involved in the addition of a carboxymethylaminomethyl (cmnm) group at the wobble position (U34) of certain tRNAs, forming tRNA-cmnm(5)s(2)U34. This Rhizorhabdus wittichii (strain DSM 6014 / CCUG 31198 / JCM 15750 / NBRC 105917 / EY 4224 / RW1) (Sphingomonas wittichii) protein is tRNA modification GTPase MnmE.